The primary structure comprises 346 residues: Histidinol-phosphate aminotransferase (346 aa).

Position 209 is an N6-(pyridoxal phosphate)lysine (lysine 209).

Belongs to the class-II pyridoxal-phosphate-dependent aminotransferase family. Histidinol-phosphate aminotransferase subfamily. In terms of assembly, homodimer. Requires pyridoxal 5'-phosphate as cofactor.

It catalyses the reaction L-histidinol phosphate + 2-oxoglutarate = 3-(imidazol-4-yl)-2-oxopropyl phosphate + L-glutamate. It participates in amino-acid biosynthesis; L-histidine biosynthesis; L-histidine from 5-phospho-alpha-D-ribose 1-diphosphate: step 7/9. This Aliivibrio fischeri (strain ATCC 700601 / ES114) (Vibrio fischeri) protein is Histidinol-phosphate aminotransferase.